The chain runs to 286 residues: Bifunctional protein FolD (286 aa).

NADP(+)-binding positions include 165-167 (GRS), S190, and I231.

The protein belongs to the tetrahydrofolate dehydrogenase/cyclohydrolase family. As to quaternary structure, homodimer.

It catalyses the reaction (6R)-5,10-methylene-5,6,7,8-tetrahydrofolate + NADP(+) = (6R)-5,10-methenyltetrahydrofolate + NADPH. It carries out the reaction (6R)-5,10-methenyltetrahydrofolate + H2O = (6R)-10-formyltetrahydrofolate + H(+). It participates in one-carbon metabolism; tetrahydrofolate interconversion. Its function is as follows. Catalyzes the oxidation of 5,10-methylenetetrahydrofolate to 5,10-methenyltetrahydrofolate and then the hydrolysis of 5,10-methenyltetrahydrofolate to 10-formyltetrahydrofolate. This Thermodesulfovibrio yellowstonii (strain ATCC 51303 / DSM 11347 / YP87) protein is Bifunctional protein FolD.